We begin with the raw amino-acid sequence, 350 residues long: Protein CONSERVED ONLY IN THE GREEN LINEAGE 160, chloroplastic (350 aa).

The N-terminal 46 residues, 1-46 (MAILSYISATSTTPPIPQDQSPNSRLPTKIILPNKKPEKWSTGVAP), are a transit peptide targeting the chloroplast. Over residues 7 to 26 (ISATSTTPPIPQDQSPNSRL) the composition is skewed to polar residues. The segment at 7-58 (ISATSTTPPIPQDQSPNSRLPTKIILPNKKPEKWSTGVAPGEYGGPPTTTKL) is disordered. Ser-117 carries the phosphoserine modification. The next 4 membrane-spanning stretches (helical) occupy residues 213-233 (KNKI…SAYI), 239-259 (IALS…MLGN), 276-296 (ANQP…RWNA), and 304-324 (FMHL…IATF).

The protein resides in the plastid. The protein localises to the chloroplast thylakoid membrane. Facilitates the assembly of the membrane proton channel of the chloroplastic F-type ATPase. Specifically required for the efficient assembly and integration of the CF(0) subunit c into the chloroplastic ATPase complex in the thylakoid membrane. The protein is Protein CONSERVED ONLY IN THE GREEN LINEAGE 160, chloroplastic of Arabidopsis thaliana (Mouse-ear cress).